A 627-amino-acid chain; its full sequence is Threonine--tRNA ligase (627 aa).

The editing domain stretch occupies residues 1 to 147 (MRMLLIHSDY…TIVPSGEAKA (147 aa)). Residues 208–507 (PHVRIMLEQE…QSKGIKPMFP (300 aa)) form a catalytic region. Zn(2+) contacts are provided by Cys-300, His-352, and His-476.

It belongs to the class-II aminoacyl-tRNA synthetase family. Homodimer. The cofactor is Zn(2+).

The protein resides in the cytoplasm. It carries out the reaction tRNA(Thr) + L-threonine + ATP = L-threonyl-tRNA(Thr) + AMP + diphosphate + H(+). Catalyzes the attachment of threonine to tRNA(Thr) in a two-step reaction: L-threonine is first activated by ATP to form Thr-AMP and then transferred to the acceptor end of tRNA(Thr). Also edits incorrectly charged L-seryl-tRNA(Thr). This chain is Threonine--tRNA ligase, found in Thermococcus onnurineus (strain NA1).